Consider the following 218-residue polypeptide: Pyridoxine/pyridoxamine 5'-phosphate oxidase (218 aa).

Substrate is bound by residues 14 to 17 (RREY) and Lys72. Residues 67-72 (RIVLLK), 82-83 (YT), Arg88, Lys89, and Gln111 contribute to the FMN site. The substrate site is built by Tyr129, Arg133, and Ser137. Residues 146-147 (QS) and Trp191 contribute to the FMN site. 197–199 (RLH) serves as a coordination point for substrate. Arg201 contributes to the FMN binding site.

Belongs to the pyridoxamine 5'-phosphate oxidase family. As to quaternary structure, homodimer. Requires FMN as cofactor.

The catalysed reaction is pyridoxamine 5'-phosphate + O2 + H2O = pyridoxal 5'-phosphate + H2O2 + NH4(+). It carries out the reaction pyridoxine 5'-phosphate + O2 = pyridoxal 5'-phosphate + H2O2. It participates in cofactor metabolism; pyridoxal 5'-phosphate salvage; pyridoxal 5'-phosphate from pyridoxamine 5'-phosphate: step 1/1. The protein operates within cofactor metabolism; pyridoxal 5'-phosphate salvage; pyridoxal 5'-phosphate from pyridoxine 5'-phosphate: step 1/1. Functionally, catalyzes the oxidation of either pyridoxine 5'-phosphate (PNP) or pyridoxamine 5'-phosphate (PMP) into pyridoxal 5'-phosphate (PLP). In Salmonella typhi, this protein is Pyridoxine/pyridoxamine 5'-phosphate oxidase.